The primary structure comprises 163 residues: NADH-quinone oxidoreductase subunit I (163 aa).

2 4Fe-4S ferredoxin-type domains span residues 55-84 (RRYP…IDAE) and 94-123 (TRYD…EGPN). 8 residues coordinate [4Fe-4S] cluster: Cys64, Cys67, Cys70, Cys74, Cys103, Cys106, Cys109, and Cys113.

Belongs to the complex I 23 kDa subunit family. NDH-1 is composed of 14 different subunits. Subunits NuoA, H, J, K, L, M, N constitute the membrane sector of the complex. Requires [4Fe-4S] cluster as cofactor.

Its subcellular location is the cell inner membrane. The enzyme catalyses a quinone + NADH + 5 H(+)(in) = a quinol + NAD(+) + 4 H(+)(out). NDH-1 shuttles electrons from NADH, via FMN and iron-sulfur (Fe-S) centers, to quinones in the respiratory chain. The immediate electron acceptor for the enzyme in this species is believed to be ubiquinone. Couples the redox reaction to proton translocation (for every two electrons transferred, four hydrogen ions are translocated across the cytoplasmic membrane), and thus conserves the redox energy in a proton gradient. The chain is NADH-quinone oxidoreductase subunit I (nuoI) from Rhodobacter capsulatus (Rhodopseudomonas capsulata).